The following is a 99-amino-acid chain: Aspartyl/glutamyl-tRNA(Asn/Gln) amidotransferase subunit C (99 aa).

It belongs to the GatC family. Heterotrimer of A, B and C subunits.

It carries out the reaction L-glutamyl-tRNA(Gln) + L-glutamine + ATP + H2O = L-glutaminyl-tRNA(Gln) + L-glutamate + ADP + phosphate + H(+). The enzyme catalyses L-aspartyl-tRNA(Asn) + L-glutamine + ATP + H2O = L-asparaginyl-tRNA(Asn) + L-glutamate + ADP + phosphate + 2 H(+). Functionally, allows the formation of correctly charged Asn-tRNA(Asn) or Gln-tRNA(Gln) through the transamidation of misacylated Asp-tRNA(Asn) or Glu-tRNA(Gln) in organisms which lack either or both of asparaginyl-tRNA or glutaminyl-tRNA synthetases. The reaction takes place in the presence of glutamine and ATP through an activated phospho-Asp-tRNA(Asn) or phospho-Glu-tRNA(Gln). In Leptothrix cholodnii (strain ATCC 51168 / LMG 8142 / SP-6) (Leptothrix discophora (strain SP-6)), this protein is Aspartyl/glutamyl-tRNA(Asn/Gln) amidotransferase subunit C.